Consider the following 410-residue polypeptide: Acetate kinase (410 aa).

Residue Asn-7 coordinates Mg(2+). Lys-14 lines the ATP pocket. Arg-88 contributes to the substrate binding site. Residue Asp-145 is the Proton donor/acceptor of the active site. ATP-binding positions include 203–207, 278–280, and 326–330; these read HAGNG, DTR, and GIGEN. Glu-379 is a binding site for Mg(2+).

The protein belongs to the acetokinase family. In terms of assembly, homodimer. Requires Mg(2+) as cofactor. Mn(2+) is required as a cofactor.

The protein resides in the cytoplasm. The catalysed reaction is acetate + ATP = acetyl phosphate + ADP. It functions in the pathway metabolic intermediate biosynthesis; acetyl-CoA biosynthesis; acetyl-CoA from acetate: step 1/2. In terms of biological role, catalyzes the formation of acetyl phosphate from acetate and ATP. Can also catalyze the reverse reaction. The chain is Acetate kinase from Onion yellows phytoplasma (strain OY-M).